The following is a 616-amino-acid chain: MAU2 chromatid cohesion factor homolog (616 aa).

3 TPR repeats span residues 90–123, 445–478, and 485–518; these read FDTA…SQHN, GSFY…ANAE, and SCSL…ASKI.

The protein belongs to the SCC4/mau-2 family. Component of the cohesin loading complex.

Its subcellular location is the nucleus. The protein resides in the nucleoplasm. In terms of biological role, required for association of the cohesin complex with chromatin during interphase. Plays a role in sister chromatid cohesion and normal progression through prometaphase. The chain is MAU2 chromatid cohesion factor homolog from Culex quinquefasciatus (Southern house mosquito).